The primary structure comprises 198 residues: NADH-quinone oxidoreductase subunit C (198 aa).

The protein belongs to the complex I 30 kDa subunit family. In terms of assembly, NDH-1 is composed of 14 different subunits. Subunits NuoB, C, D, E, F, and G constitute the peripheral sector of the complex.

The protein localises to the cell inner membrane. It catalyses the reaction a quinone + NADH + 5 H(+)(in) = a quinol + NAD(+) + 4 H(+)(out). In terms of biological role, NDH-1 shuttles electrons from NADH, via FMN and iron-sulfur (Fe-S) centers, to quinones in the respiratory chain. The immediate electron acceptor for the enzyme in this species is believed to be ubiquinone. Couples the redox reaction to proton translocation (for every two electrons transferred, four hydrogen ions are translocated across the cytoplasmic membrane), and thus conserves the redox energy in a proton gradient. The polypeptide is NADH-quinone oxidoreductase subunit C (Janthinobacterium sp. (strain Marseille) (Minibacterium massiliensis)).